Reading from the N-terminus, the 288-residue chain is Aminoglycoside 6-adenylyltransferase (288 aa).

It catalyses the reaction streptomycin + ATP = 6-O-adenylylstreptomycin + diphosphate. Its function is as follows. Mediates bacterial resistance to streptomycin, is probably a streptomycin 6-adenylyltransferase. In Campylobacter jejuni, this protein is Aminoglycoside 6-adenylyltransferase.